The chain runs to 76 residues: MNKALFLCLVVLCAAVVFAAEDLQKAKHVPFKRAAICFCPGKPDRGDLWIFRGTCPGGYGYTSNCYKWPNICCYPH.

The first 19 residues, 1–19 (MNKALFLCLVVLCAAVVFA), serve as a signal peptide directing secretion. Residues 20-31 (AEDLQKAKHVPF) constitute a propeptide that is removed on maturation. 3 disulfides stabilise this stretch: cysteine 37–cysteine 72, cysteine 39–cysteine 65, and cysteine 55–cysteine 73.

It belongs to the sea anemone type 3 (BDS) potassium channel toxin family. In terms of tissue distribution, moderately expressed in the ectodermal tissue from the distal and proximal tentacles, body wall, and oral disk.

The protein resides in the secreted. It localises to the nematocyst. Its function is as follows. Blocks Kv3 voltage-gated potassium channels. Reduces blood pressure. This is Kappa-actitoxin-Avd4d from Anemonia viridis (Snakelocks anemone).